We begin with the raw amino-acid sequence, 426 residues long: Serine--tRNA ligase (426 aa).

Position 233 to 235 (233 to 235 (TAE)) interacts with L-serine. Residue 264–266 (RSE) coordinates ATP. Glu-287 contributes to the L-serine binding site. Residue 351–354 (EISS) participates in ATP binding. Ser-387 lines the L-serine pocket.

It belongs to the class-II aminoacyl-tRNA synthetase family. Type-1 seryl-tRNA synthetase subfamily. Homodimer. The tRNA molecule binds across the dimer.

It localises to the cytoplasm. It catalyses the reaction tRNA(Ser) + L-serine + ATP = L-seryl-tRNA(Ser) + AMP + diphosphate + H(+). The catalysed reaction is tRNA(Sec) + L-serine + ATP = L-seryl-tRNA(Sec) + AMP + diphosphate + H(+). It functions in the pathway aminoacyl-tRNA biosynthesis; selenocysteinyl-tRNA(Sec) biosynthesis; L-seryl-tRNA(Sec) from L-serine and tRNA(Sec): step 1/1. In terms of biological role, catalyzes the attachment of serine to tRNA(Ser). Is also able to aminoacylate tRNA(Sec) with serine, to form the misacylated tRNA L-seryl-tRNA(Sec), which will be further converted into selenocysteinyl-tRNA(Sec). The sequence is that of Serine--tRNA ligase from Clostridium botulinum (strain Loch Maree / Type A3).